A 147-amino-acid polypeptide reads, in one-letter code: SPI-1 type 3 secretion system pilotin (147 aa).

Residues 1 to 15 (MKKFYSCLPVFLLIG) form the signal peptide. Residue cysteine 16 is the site of N-palmitoyl cysteine attachment. Cysteine 16 carries S-diacylglycerol cysteine lipidation.

The protein belongs to the InvH family.

The protein resides in the cell outer membrane. Functionally, involved in the synthesis of the type III secretion system (T3SS), also called injectisome, which is used to inject bacterial effector proteins into eukaryotic host cells. Pilot protein that is required for the proper localization of the secretin InvG/SctC in the outer membrane. Necessary for efficient adherence and entry of these organisms into cultured epithelial cells. The polypeptide is SPI-1 type 3 secretion system pilotin (Salmonella choleraesuis (strain SC-B67)).